A 103-amino-acid chain; its full sequence is Small ribosomal subunit protein eS24 (103 aa).

It belongs to the eukaryotic ribosomal protein eS24 family.

In Methanococcus maripaludis (strain C6 / ATCC BAA-1332), this protein is Small ribosomal subunit protein eS24.